The primary structure comprises 211 residues: Large ribosomal subunit protein uL3 (211 aa).

Residues Q130 to S139 are compositionally biased toward polar residues. The tract at residues Q130 to T151 is disordered. An N5-methylglutamine modification is found at Q150.

The protein belongs to the universal ribosomal protein uL3 family. Part of the 50S ribosomal subunit. Forms a cluster with proteins L14 and L19. Methylated by PrmB.

In terms of biological role, one of the primary rRNA binding proteins, it binds directly near the 3'-end of the 23S rRNA, where it nucleates assembly of the 50S subunit. This is Large ribosomal subunit protein uL3 from Alcanivorax borkumensis (strain ATCC 700651 / DSM 11573 / NCIMB 13689 / SK2).